A 416-amino-acid chain; its full sequence is MDLLIENARLVSMERGEAGYLPTPPARVGIQAGKIAAISAHPVGRDTPQIEALLSPQHYSQTIDLQGQLLTPGLIDCHTHLIYAGNRANEFEMRLNGVPYQEIAKQGGGILSSVKATRAATEEQLIELALPRLDGLLASGVTSVEVKSGYGLTLKDELKMLRAAKALEQERNVKITTTLLAAHALPPEFEGRADDYIEHVCQEIIPIVAEENLATSVDVFCESIGFNLEQTEKVFATAKLYGLHVKGHTEQLSNLGGTELTARYKGLSADHIEYLDEDGVVALSKSDTVATLLPGAFYFLRETQLPPIELLRKYHVPMAIATDVNPGTSPFSDLTLMMNMACTLFRLTPQEALRGVTQHAATALGYTNSRGVIKTGFDADLAIWDIEHPADLSYQVGAKRLVGRIVNGEYVSHGGF.

Fe(3+)-binding residues include His78 and His80. Residues His78 and His80 each contribute to the Zn(2+) site. 3 residues coordinate 4-imidazolone-5-propanoate: Arg87, Tyr150, and His183. Tyr150 is a binding site for N-formimidoyl-L-glutamate. Residue His248 coordinates Fe(3+). His248 serves as a coordination point for Zn(2+). Residue Gln251 coordinates 4-imidazolone-5-propanoate. Asp323 lines the Fe(3+) pocket. Asp323 contributes to the Zn(2+) binding site. N-formimidoyl-L-glutamate contacts are provided by Asn325 and Gly327. Thr328 is a binding site for 4-imidazolone-5-propanoate.

Belongs to the metallo-dependent hydrolases superfamily. HutI family. Zn(2+) serves as cofactor. It depends on Fe(3+) as a cofactor.

It localises to the cytoplasm. The catalysed reaction is 4-imidazolone-5-propanoate + H2O = N-formimidoyl-L-glutamate. Its pathway is amino-acid degradation; L-histidine degradation into L-glutamate; N-formimidoyl-L-glutamate from L-histidine: step 3/3. Catalyzes the hydrolytic cleavage of the carbon-nitrogen bond in imidazolone-5-propanoate to yield N-formimidoyl-L-glutamate. It is the third step in the universal histidine degradation pathway. The protein is Imidazolonepropionase of Vibrio parahaemolyticus serotype O3:K6 (strain RIMD 2210633).